A 281-amino-acid polypeptide reads, in one-letter code: Aquaporin-9 (281 aa).

Topologically, residues 1 to 17 (MGAFVNTKVYIENKNIR) are cytoplasmic. The helical transmembrane segment at 18–36 (DWLSEALSMFMYMSLLLGS) threads the bilayer. At 37–50 (AATGHFSGREDDAL) the chain is on the extracellular side. The helical transmembrane segment at 51–69 (FGVIFQGFSITFGIYIGGA) threads the bilayer. At 70-71 (MS) the chain is on the cytoplasmic side. The discontinuously helical intramembrane region spans 72–84 (GAIINPALTLAVA). The NPA 1 motif lies at 76–78 (NPA). Over 85 to 90 (LLGKIS) the chain is Cytoplasmic. A helical transmembrane segment spans residues 91–115 (WRKCIVLQSAQYIGSFIASAVVYLI). Topologically, residues 116-157 (YNDSLDAFGAGANFTATEPGVFRKDVAGIWSTFPKTYLKERG) are extracellular. Asparagine 117 and asparagine 128 each carry an N-linked (GlcNAc...) asparagine glycan. A helical transmembrane segment spans residues 158-175 (AIFNQIFCSMLLTFGFLA). Topologically, residues 176 to 187 (ISDYKNFRPSKG) are cytoplasmic. The helical transmembrane segment at 188 to 204 (LFPIAVGLLVMTVFLAF) threads the bilayer. Residues 205–207 (SYS) lie on the Extracellular side of the membrane. An intramembrane region (discontinuously helical) is located at residues 208–222 (TGAAMNPARDFSPRL). The short motif at 213–215 (NPA) is the NPA 2 element. The Extracellular portion of the chain corresponds to 223–241 (WSLIIGYGIEVFSYNQYEW). Residues 242–262 (FWIPWLMPYVGAMLGALIYQL) traverse the membrane as a helical segment. Over 263–281 (LIGAQWSKGQKGESKHKDP) the chain is Cytoplasmic.

This sequence belongs to the MIP/aquaporin (TC 1.A.8) family.

The protein resides in the cell membrane. It catalyses the reaction H2O(in) = H2O(out). Aquaglyceroporin that may modulate the water content and osmolytes during anhydrobiosis. This is Aquaporin-9 from Milnesium tardigradum (Water bear).